The sequence spans 247 residues: Cytochrome c oxidase subunit 2 (247 aa).

At Asp12 to Asn38 the chain is on the mitochondrial intermembrane side. Residues Ile39–Lys59 form a helical membrane-spanning segment. Residues Asp60 to Glu78 lie on the Mitochondrial matrix side of the membrane. The helical transmembrane segment at Ile79–Tyr101 threads the bilayer. The Mitochondrial intermembrane segment spans residues Leu102 to Gln247. Residues His182, Cys217, Glu219, Cys221, His225, and Met228 each contribute to the Cu cation site. Position 219 (Glu219) interacts with Mg(2+).

It belongs to the cytochrome c oxidase subunit 2 family. In terms of assembly, component of the cytochrome c oxidase (complex IV, CIV), a multisubunit enzyme composed of a catalytic core of 3 subunits and several supernumerary subunits. The complex exists as a monomer or a dimer and forms supercomplexes (SCs) in the inner mitochondrial membrane with ubiquinol-cytochrome c oxidoreductase (cytochrome b-c1 complex, complex III, CIII). Requires Cu cation as cofactor. In terms of processing, the signal sequence of COX2 is processed by IMP1.

It localises to the mitochondrion inner membrane. It carries out the reaction 4 Fe(II)-[cytochrome c] + O2 + 8 H(+)(in) = 4 Fe(III)-[cytochrome c] + 2 H2O + 4 H(+)(out). Component of the cytochrome c oxidase, the last enzyme in the mitochondrial electron transport chain which drives oxidative phosphorylation. The respiratory chain contains 3 multisubunit complexes succinate dehydrogenase (complex II, CII), ubiquinol-cytochrome c oxidoreductase (cytochrome b-c1 complex, complex III, CIII) and cytochrome c oxidase (complex IV, CIV), that cooperate to transfer electrons derived from NADH and succinate to molecular oxygen, creating an electrochemical gradient over the inner membrane that drives transmembrane transport and the ATP synthase. Cytochrome c oxidase is the component of the respiratory chain that catalyzes the reduction of oxygen to water. Electrons originating from reduced cytochrome c in the intermembrane space (IMS) are transferred via the dinuclear copper A center (CU(A)) of subunit 2 and heme A of subunit 1 to the active site in subunit 1, a binuclear center (BNC) formed by heme A3 and copper B (CU(B)). The BNC reduces molecular oxygen to 2 water molecules using 4 electrons from cytochrome c in the IMS and 4 protons from the mitochondrial matrix. The chain is Cytochrome c oxidase subunit 2 (COX2) from Cyberlindnera saturnus (Yeast).